Reading from the N-terminus, the 302-residue chain is Ventral anterior homeobox 2a (302 aa).

Disordered regions lie at residues 1 to 35 (MFDQ…RDKG), 50 to 73 (KDIP…SQST), 156 to 175 (RRTK…SSST), 199 to 223 (PPNL…LGTS), and 282 to 302 (AFEP…KSTS). The homeobox DNA-binding region spans 105–164 (PKRTRTSFTAEQLYRLELEFQRCQYVVGRERTELARQLNLSETQVKVWFQNRRTKQKKDQ). Residues 161–172 (KKDQSRDSEKRS) show a composition bias toward basic and acidic residues. The segment covering 204–223 (SSSQNNMGTSSGNGTNLGTS) has biased composition (low complexity). The span at 287-296 (TRLDRKDTAS) shows a compositional bias: basic and acidic residues.

It belongs to the EMX homeobox family.

Its subcellular location is the nucleus. In terms of biological role, transcription factor that may function in dorsoventral specification of the forebrain. Regulates the expression of Wnt signaling antagonists including the expression of a truncated tcf7l2 isoform that cannot bind ctnnb1 and acts therefore as a potent dominant-negative Wnt antagonist. Plays a crucial role in eye development and, in particular, in the specification of the ventral optic vesicle. May be a regulator of axial polarization in the retina. The polypeptide is Ventral anterior homeobox 2a (vax2-a) (Xenopus laevis (African clawed frog)).